An 849-amino-acid chain; its full sequence is MAP7 domain-containing protein 1 (849 aa).

Disordered stretches follow at residues 1 to 151 (MESG…REER) and 186 to 210 (EQRLKAEQRRAALEERQRQKLEKNK). Over residues 24-41 (EPRPSPEGDPSPPPPPTP) the composition is skewed to pro residues. A phosphothreonine mark is found at Thr-49 and Thr-53. 2 positions are modified to phosphoserine: Ser-72 and Ser-95. Thr-99 carries the post-translational modification Phosphothreonine. A phosphoserine mark is found at Ser-115 and Ser-118. The residue at position 120 (Thr-120) is a Phosphothreonine. 2 positions are modified to phosphoserine: Ser-125 and Ser-127. Residues 132-151 (QDVKKAGERHKLAKERREER) show a composition bias toward basic and acidic residues. Positions 167-223 (EKAKALREKQLQERRRRLEEQRLKAEQRRAALEERQRQKLEKNKERYEAAIQRSVKK) form a coiled coil. Residues Ser-256, Ser-275, Ser-315, Ser-368, and Ser-401 each carry the phosphoserine modification. The disordered stretch occupies residues 318-815 (TLPRNGRDQG…GFPAKGTAGD (498 aa)). Positions 407 to 437 (RRLEATPVQKKEKKDKERENEKEKSALARER) are enriched in basic and acidic residues. Phosphoserine occurs at positions 444, 448, 454, and 460. Residues 457 to 474 (AELSTKSKARPTSPSTTW) show a composition bias toward polar residues. Lys-462 participates in a covalent cross-link: Glycyl lysine isopeptide (Lys-Gly) (interchain with G-Cter in SUMO2). 2 positions are modified to phosphoserine: Ser-479 and Ser-496. Over residues 479 to 497 (SPCPSPGPGHTLPPKPPSP) the composition is skewed to pro residues. The span at 523–539 (PEDKNHSKSRTAEEKEP) shows a compositional bias: basic and acidic residues. Residues 542-556 (PASPAPSPVPSPTPA) are compositionally biased toward pro residues. Phosphoserine is present on residues Ser-544, Ser-548, and Ser-552. The residue at position 554 (Thr-554) is a Phosphothreonine. The span at 568-582 (PPDTAVPAVPTVPTF) shows a compositional bias: low complexity. Residues 602-724 (TTDREEATRL…QERRKRLEEI (123 aa)) are a coiled coil. The span at 603-743 (TDREEATRLL…AETKKQDGKE (141 aa)) shows a compositional bias: basic and acidic residues.

It belongs to the MAP7 family.

Its subcellular location is the cytoplasm. The protein resides in the cytoskeleton. It is found in the spindle. The protein localises to the microtubule organizing center. It localises to the centrosome. Its subcellular location is the midbody. Microtubule-stabilizing protein involved in the control of cell motility and neurite outgrowth. Facilitate microtubule stabilization through the maintenance of acetylated stable microtubules. In Rattus norvegicus (Rat), this protein is MAP7 domain-containing protein 1 (Map7d1).